Consider the following 61-residue polypeptide: Large ribosomal subunit protein uL30 (61 aa).

Belongs to the universal ribosomal protein uL30 family. As to quaternary structure, part of the 50S ribosomal subunit.

This chain is Large ribosomal subunit protein uL30, found in Chlorobium luteolum (strain DSM 273 / BCRC 81028 / 2530) (Pelodictyon luteolum).